The chain runs to 151 residues: MADNDNEDVIMDDLVEEYVETEEENFVDSEEESEDKSEDKDEIVESPSICEGFVQASSQTLVIIPDNERITSNVLTTFEATRLVAVRAQQLAINGSTMLKKKYSSPIDIAKQELFNRKIPLLVMRCIKVTPEGQKIVEIWNPREMGIPLLD.

Positions 20-44 (ETEEENFVDSEEESEDKSEDKDEIV) are enriched in acidic residues. A disordered region spans residues 20 to 46 (ETEEENFVDSEEESEDKSEDKDEIVES).

Belongs to the archaeal RpoK/eukaryotic RPB6 RNA polymerase subunit family. As to quaternary structure, part of the viral DNA-directed RNA polymerase that consists of 8 polII-like subunits (RPB1, RPB2, RPB3, RPB5, RPB6, RPB7, RPB9, RPB10), a capping enzyme and a termination factor.

The protein localises to the host cytoplasm. It is found in the virion. In terms of biological role, component of the DNA-directed RNA polymerase (RNAP) that catalyzes the transcription in the cytoplasm of viral DNA into RNA using the four ribonucleoside triphosphates as substrates. In African swine fever virus (isolate Tick/Malawi/Lil 20-1/1983) (ASFV), this protein is DNA-directed RNA polymerase RPB6 homolog.